A 389-amino-acid polypeptide reads, in one-letter code: MMISEIRQELTDHIIPFWNKLRDDENGGFYGYLSYGLGLDKKADKGVILHSRILWFYSNAYMTLGGDELLDNAKHAYEFIKNNCIDYEYGGVYWMMDFEGKPADTMKHTYNIAFAIYALSSYYRASGDKEALALAYRPFEDIEKNTLYEYGYREAFDRQWRLVDNEALSENGLKADKTMNAILHLIEAYTELYKADGNEKVADRLKFQLGQMRDIVYTPDTNALKVFFDTAFNLVGDIHSYGHDIEATWLMDRACDVLGDEDLKKQFAEMDLKISHNIQDIALEDGALNNERDKNEIDKTRVWWVQAEAVVGFINAYQHSGDEKFLESAKSVWENIKEYIIDKREGGEWYSEVTFDHTPHDYKETVGPWKCPYHNGRMCMEVITRGVDI.

This sequence belongs to the cellobiose 2-epimerase family.

It localises to the cytoplasm. It catalyses the reaction D-cellobiose = beta-D-glucosyl-(1-&gt;4)-D-mannopyranose. Its activity is regulated as follows. Enhanced by Mg(2+) and Ca(2+) ions, ethylenediaminetetraacetic acid, ethylene glycol tetraacetic acid and citrate. Inhibited by Al(3+), Fe(3+), Co(2+), Cu(2+), Zn(2+), Pb(2+) and Ag(+) ions, iodoacetate, 4-chloromercuribenzoate and N-bromosuccinimide. Its function is as follows. Catalyzes the reversible epimerization of cellobiose to 4-O-beta-D-glucopyranosyl-D-mannose (Glc-Man). Can also epimerize cellotriose to Glc-Glc-Man, cellotetraose to Glc-Glc-Glc-Man, and lactose to epilactose. The sequence is that of Cellobiose 2-epimerase (ce-ne1) from Ruminococcus albus.